The following is a 543-amino-acid chain: MSTFQLSASSKDSYLFRTEEELEEEVYGKTGFFKHIRVARNEWPRVLYLSLLFGVITMVHTIMGNLREMVLMGRQDPMSMFFIKSIFLPPCSLLFIWAIQLGLSLFTPSKMFDITLILFSGCYILFGLVVWPLKGYIQKDFYWSRDIFGDGKMESLRIHFLYPVFLVFNEWTSSFLFLCSEMWGALVVSYFFNIFANEVSTRRQSQRYISVYNISNAISIFLSAVLTLVFNKWRDGVAFETKELGFRILILVLGSTVIGILALKKYMEREILPAPVFLIREVEKTSTERRKLKLDEARQTLSRSKLLIAISLNVLLYGVTSTLVEATFKSGIAAGARYTNNSKETFANFYNGLEQIIIAISLLVVINTPYSALVKKGGWKYLASLPIVIAMFSLFSVFLIAFYNVGADSGGNVLFGSLFKNRMPTFILENTLGLVTNASMKIGKYLGADVSKEAISMQIDPLYRAKYKAVYDGLCGKLGKSLGSIICTVMTGLWDITDIRRVSSVSGILIVIIIAMWYFILKYLSRQFQAAVEANTYIELDEF.

10 helical membrane-spanning segments follow: residues 46–66 (VLYL…MGNL), 86–106 (IFLP…LSLF), 111–131 (MFDI…LVVW), 175–195 (FLFL…FNIF), 209–229 (ISVY…LTLV), 243–263 (ELGF…ILAL), 306–326 (LLIA…LVEA), 346–366 (FANF…LVVI), 382–402 (LASL…LIAF), and 504–524 (SVSG…LKYL).

The protein belongs to the ADP/ATP translocase tlc family.

It is found in the mitosome membrane. ATP transporter involved in the uptake of ATP from the parasite cell cytoplasm into the mitosome matrix. Equilibrates nucleotide pools across a concentration gradient between both sides of the mitosome membrane. The sequence is that of ADP,ATP carrier protein 3 (NTT3) from Encephalitozoon cuniculi (strain GB-M1) (Microsporidian parasite).